We begin with the raw amino-acid sequence, 376 residues long: Anhydro-N-acetylmuramic acid kinase (376 aa).

16–23 (GTSMDGVD) is an ATP binding site.

The protein belongs to the anhydro-N-acetylmuramic acid kinase family.

It catalyses the reaction 1,6-anhydro-N-acetyl-beta-muramate + ATP + H2O = N-acetyl-D-muramate 6-phosphate + ADP + H(+). It participates in amino-sugar metabolism; 1,6-anhydro-N-acetylmuramate degradation. Its pathway is cell wall biogenesis; peptidoglycan recycling. Its function is as follows. Catalyzes the specific phosphorylation of 1,6-anhydro-N-acetylmuramic acid (anhMurNAc) with the simultaneous cleavage of the 1,6-anhydro ring, generating MurNAc-6-P. Is required for the utilization of anhMurNAc either imported from the medium or derived from its own cell wall murein, and thus plays a role in cell wall recycling. This Paraburkholderia xenovorans (strain LB400) protein is Anhydro-N-acetylmuramic acid kinase.